Reading from the N-terminus, the 429-residue chain is 3-phosphoshikimate 1-carboxyvinyltransferase (429 aa).

3 residues coordinate 3-phosphoshikimate: lysine 23, serine 24, and arginine 28. Lysine 23 contributes to the phosphoenolpyruvate binding site. Residues glycine 94 and arginine 126 each contribute to the phosphoenolpyruvate site. Positions 171, 172, 173, 199, 316, 339, and 343 each coordinate 3-phosphoshikimate. Glutamine 173 contributes to the phosphoenolpyruvate binding site. Catalysis depends on aspartate 316, which acts as the Proton acceptor. The phosphoenolpyruvate site is built by arginine 347, arginine 389, and lysine 414.

The protein belongs to the EPSP synthase family. Monomer.

The protein localises to the cytoplasm. It catalyses the reaction 3-phosphoshikimate + phosphoenolpyruvate = 5-O-(1-carboxyvinyl)-3-phosphoshikimate + phosphate. It participates in metabolic intermediate biosynthesis; chorismate biosynthesis; chorismate from D-erythrose 4-phosphate and phosphoenolpyruvate: step 6/7. In terms of biological role, catalyzes the transfer of the enolpyruvyl moiety of phosphoenolpyruvate (PEP) to the 5-hydroxyl of shikimate-3-phosphate (S3P) to produce enolpyruvyl shikimate-3-phosphate and inorganic phosphate. The protein is 3-phosphoshikimate 1-carboxyvinyltransferase of Idiomarina loihiensis (strain ATCC BAA-735 / DSM 15497 / L2-TR).